The following is a 403-amino-acid chain: Ribosomal RNA large subunit methyltransferase I (403 aa).

Residues 9–88 (YPRLVLSKGR…EPVDIAFFTR (80 aa)) form the PUA domain.

The protein belongs to the methyltransferase superfamily. RlmI family.

Its subcellular location is the cytoplasm. The catalysed reaction is cytidine(1962) in 23S rRNA + S-adenosyl-L-methionine = 5-methylcytidine(1962) in 23S rRNA + S-adenosyl-L-homocysteine + H(+). Functionally, specifically methylates the cytosine at position 1962 (m5C1962) of 23S rRNA. This is Ribosomal RNA large subunit methyltransferase I from Salmonella arizonae (strain ATCC BAA-731 / CDC346-86 / RSK2980).